The primary structure comprises 209 residues: Ribonuclease HII (209 aa).

Residues 20–209 (QLEIGIDEVG…KSFLTKLNLI (190 aa)) enclose the RNase H type-2 domain. Residues D26, E27, and D122 each contribute to the a divalent metal cation site.

Belongs to the RNase HII family. Requires Mn(2+) as cofactor. It depends on Mg(2+) as a cofactor.

The protein resides in the cytoplasm. It carries out the reaction Endonucleolytic cleavage to 5'-phosphomonoester.. Functionally, endonuclease that specifically degrades the RNA of RNA-DNA hybrids. This Prochlorococcus marinus (strain MIT 9515) protein is Ribonuclease HII.